The following is a 158-amino-acid chain: Regenerating islet-derived protein 4 (158 aa).

Residues 1-22 (MASRSMRLLLLLSCLAKTGVLG) form the signal peptide. Cys30 and Cys41 are disulfide-bonded. The region spanning 37-155 (HKSNCYGYFR…CNKRQHFLCK (119 aa)) is the C-type lectin domain. A glycan (N-linked (GlcNAc...) asparagine) is linked at Asn50. Disulfide bonds link Cys58-Cys154 and Cys129-Cys146. A carbohydrate is bound by residues 98-103 (DPQKRQ) and 135-137 (NNN).

Highly expressed in the gastrointestinal tract including the duodenum, jejunum, ileum, ileocecum, appendix, descending colon, pancreas and small intestine. Weakly expressed in normal colon and stomach. Strongly expressed in most colorectal tumors than in normal colon. Preferentially expressed in mucinous tumors and in some cases neuro-endocrine tumors. Expressed in mucus-secreting cells and enterocyte-like cells. In small intestine expressed at the basal perinuclear zone of goblet cells.

Its subcellular location is the secreted. In terms of biological role, calcium-independent lectin displaying mannose-binding specificity and able to maintain carbohydrate recognition activity in an acidic environment. May be involved in inflammatory and metaplastic responses of the gastrointestinal epithelium. In Homo sapiens (Human), this protein is Regenerating islet-derived protein 4 (REG4).